Reading from the N-terminus, the 116-residue chain is MNFTFLVVVLLTALAFVGVVIALSRAISPRSYNVQKFEAYECGIPTRGKSWMQFRVGYYLFAILFLMFDVETAFLFPWAVVMHDMGPQGLVSILFFFIILVLGLAYAWRKGALEWK.

3 helical membrane passes run 3–23, 61–81, and 88–108; these read FTFL…VIAL, FAIL…WAVV, and QGLV…AYAW.

Belongs to the complex I subunit 3 family. In terms of assembly, NDH-1 is composed of 14 different subunits. Subunits NuoA, H, J, K, L, M, N constitute the membrane sector of the complex.

The protein resides in the cell inner membrane. It carries out the reaction a quinone + NADH + 5 H(+)(in) = a quinol + NAD(+) + 4 H(+)(out). Functionally, NDH-1 shuttles electrons from NADH, via FMN and iron-sulfur (Fe-S) centers, to quinones in the respiratory chain. The immediate electron acceptor for the enzyme in this species is believed to be a menaquinone. Couples the redox reaction to proton translocation (for every two electrons transferred, four hydrogen ions are translocated across the cytoplasmic membrane), and thus conserves the redox energy in a proton gradient. The polypeptide is NADH-quinone oxidoreductase subunit A (Bacteroides thetaiotaomicron (strain ATCC 29148 / DSM 2079 / JCM 5827 / CCUG 10774 / NCTC 10582 / VPI-5482 / E50)).